The primary structure comprises 1156 residues: Protein hu-li tai shao (1156 aa).

Positions methionine 1–glutamate 36 are disordered. Over residues asparagine 22 to glutamate 36 the composition is skewed to basic and acidic residues. Phosphoserine is present on serine 478. Residues threonine 480 and threonine 498 each carry the phosphothreonine modification. Serine 603 bears the Phosphoserine mark. At tyrosine 608 the chain carries Phosphotyrosine. Threonine 609 and threonine 611 each carry phosphothreonine. The residue at position 614 (serine 614) is a Phosphoserine. Tyrosine 627 carries the post-translational modification Phosphotyrosine. A Phosphoserine modification is found at serine 630. The segment at phenylalanine 897–isoleucine 956 is disordered. Residues leucine 904–phenylalanine 929 show a composition bias toward basic and acidic residues.

Belongs to the aldolase class II family. Adducin subfamily. As to expression, isoform C is expressed in nurse cells. Isoform A is produced in the nurse cell but transported into the oocyte at stage 1, localizes to the oocyte cortex at stage 8 and to the anterior pole from day 9 onwards. Isoform B is expressed in the somatic follicle cells that surround the germline.

The protein resides in the cytoplasm. The protein localises to the cytoskeleton. Its subcellular location is the cell membrane. Required for assembling actin at ring canals in developing egg chambers. Probably interacts with other developmental proteins involved in nurse cell/oocyte transport through the ring canals. Important for normal neuromotor function. This chain is Protein hu-li tai shao (hts), found in Drosophila melanogaster (Fruit fly).